The chain runs to 103 residues: Protein reprimo A (103 aa).

The helical transmembrane segment at 50–70 (IVQIAVMCVLSLTVVFGIFFL) threads the bilayer.

Belongs to the reprimo family.

The protein resides in the cytoplasm. The protein localises to the membrane. May be involved in the regulation of p53-dependent G2 arrest of the cell cycle. This Danio rerio (Zebrafish) protein is Protein reprimo A.